Here is a 345-residue protein sequence, read N- to C-terminus: L-Ala-D/L-Glu epimerase (345 aa).

The substrate site is built by Thr134 and Lys159. Residue Lys161 is the Proton acceptor; specific for (R)-substrate epimerization of the active site. Mg(2+) is bound at residue Asp188. Residue Asn190 coordinates substrate. Mg(2+)-binding residues include Glu216 and Asp241. Catalysis depends on Lys265, which acts as the Proton acceptor; specific for (S)-substrate epimerization. 3 residues coordinate substrate: Cys292, Asp317, and Asp319.

Belongs to the mandelate racemase/muconate lactonizing enzyme family. Requires Mg(2+) as cofactor.

It carries out the reaction L-alanyl-L-glutamate = L-alanyl-D-glutamate. It functions in the pathway cell wall degradation; peptidoglycan degradation. Catalyzes the epimerization of L-Ala-D-Glu to L-Ala-L-Glu and has probably a role in the metabolism of the murein peptide, of which L-Ala-D-Glu is a component. Is also able to catalyze the reverse reaction and the epimerization of a broad range of other dipeptides; is most efficient with L-Ala-D/L-Phe, L-Ala-D/L-Tyr, and L-Ala-D/L-His. The protein is L-Ala-D/L-Glu epimerase of Thermotoga maritima (strain ATCC 43589 / DSM 3109 / JCM 10099 / NBRC 100826 / MSB8).